The primary structure comprises 448 residues: Lipoamide acyltransferase component of branched-chain alpha-keto acid dehydrogenase complex, mitochondrial (448 aa).

The Lipoyl-binding domain occupies valine 30–glutamate 105. The residue at position 71 (lysine 71) is an N6-lipoyllysine. Disordered regions lie at residues glycine 108 to leucine 146 and threonine 191 to tyrosine 211. A compositionally biased stretch (low complexity) spans alanine 121–proline 136. Positions leucine 146–leucine 183 constitute a Peripheral subunit-binding (PSBD) domain. Residues threonine 191–serine 210 show a composition bias toward polar residues. CoA-binding residues include arginine 257, serine 272, aspartate 315, serine 365, asparagine 366, glycine 390, and isoleucine 392. Residues histidine 418 and aspartate 422 contribute to the active site.

It belongs to the 2-oxoacid dehydrogenase family. (R)-lipoate serves as cofactor. Ubiquitously expressed.

The protein localises to the mitochondrion matrix. Its subcellular location is the cytoplasm. The protein resides in the cytosol. It localises to the cell projection. It is found in the dendrite. The protein localises to the cilium. It carries out the reaction N(6)-[(R)-dihydrolipoyl]-L-lysyl-[protein] + 2-methylpropanoyl-CoA = N(6)-[(R)-S(8)-2-methylpropanoyldihydrolipoyl]-L-lysyl-[protein] + CoA. Functionally, the branched-chain alpha-keto dehydrogenase complex catalyzes the overall conversion of alpha-keto acids to acyl-CoA and CO(2). It contains multiple copies of three enzymatic components: branched-chain alpha-keto acid decarboxylase (E1), lipoamide acyltransferase (E2) and lipoamide dehydrogenase (E3). Within this complex, the catalytic function of this enzyme is to accept, and to transfer to coenzyme A, acyl groups that are generated by the branched-chain alpha-keto acid decarboxylase component. Required for the catabolism of branched-chain amino acids and the subsequent synthesis of monomethyl branched-chain fatty acids, which are important for regulating postembryonic growth. This chain is Lipoamide acyltransferase component of branched-chain alpha-keto acid dehydrogenase complex, mitochondrial, found in Caenorhabditis elegans.